Here is a 1311-residue protein sequence, read N- to C-terminus: Sterol regulatory element-binding protein cleavage-activating protein (1311 aa).

The Cytoplasmic portion of the chain corresponds to 1-18 (MPLIDKLRERISRAFYSH). The chain crosses the membrane as a helical span at residues 19–39 (GLLCASYPIPIIILTALCILA). Residues 40 to 277 (SCYPLLKLPL…HIVHVHFKEE (238 aa)) are Lumenal-facing. The interval 46–282 (KLPLPGTGPV…HFKEEIGIAE (237 aa)) is loop-1. N-linked (GlcNAc...) asparagine glycans are attached at residues N242 and N261. A helical transmembrane segment spans residues 278 to 298 (IGIAELIPLVTTYIILFAYIY). The 159-residue stretch at 282-440 (ELIPLVTTYI…MFFFTTVLSI (159 aa)) folds into the SSD domain. The Cytoplasmic portion of the chain corresponds to 299-310 (FSTRKIDLVKSK). A helical membrane pass occupies residues 311-331 (WGLALAAVVTVLSSLLMSVGL). At 332 to 342 (CTLFGLTPTLN) the chain is on the lumenal side. A helical membrane pass occupies residues 343 to 363 (GGEIFPYLVVVIGLENVLVLT). The Cytoplasmic portion of the chain corresponds to 364 to 399 (KSVVSTPVDLEVKLRIAQGLRNESWFIMKNMATELG). A helical transmembrane segment spans residues 400–420 (IILIGYFTLVPAIQEFCLFAV). Residue V421 is a topological domain, lumenal. A helical membrane pass occupies residues 422–442 (GLVSDFFLQMFFFTTVLSIDI). Residues 443–512 (RRMELADLNK…FFARTRLAQR (70 aa)) lie on the Cytoplasmic side of the membrane. An ER export signal motif is present at residues 445–450 (MELADL). The helical transmembrane segment at 513–533 (IIMAGTVVWIGILVYTDPAGL) threads the bilayer. The tract at residues 529–726 (DPAGLRNYLT…QTPADVTLYK (198 aa)) is loop-7. The Lumenal portion of the chain corresponds to 534–723 (RNYLTVHVTE…TENQTPADVT (190 aa)). 2 N-linked (GlcNAc...) asparagine glycosylation sites follow: N583 and N651. A helical membrane pass occupies residues 724-744 (LYKVAALGLASGIFLVLFFFL). Residues 745-1311 (LYRLLCPKNY…YVPSVLEKLD (567 aa)) lie on the Cytoplasmic side of the membrane. The tract at residues 747-1311 (RLLCPKNYGQ…YVPSVLEKLD (565 aa)) is interaction with srebf. 7 WD repeats span residues 790-827 (GHHM…CLTI), 997-1034 (SFES…LRCS), 1037-1076 (DGQS…NQLQ), 1109-1146 (AHRK…CLFT), 1149-1187 (GHSG…RVSH), 1190-1227 (GHRG…KLYS), and 1230-1267 (QDLG…LLQT).

It belongs to the WD repeat SCAP family. In terms of assembly, membrane region forms a homotetramer. Component of the SCAP-SREBP complex (composed of SCAP and srebf1/srebp1 or srebf2/srebp2). Forms a ternary complex with insig1 or insig2 through its transmembrane domains at high sterol concentrations. Interacts with the SEC23-SEC24 complex.

The protein resides in the endoplasmic reticulum membrane. It is found in the golgi apparatus membrane. Its subcellular location is the cytoplasmic vesicle. It localises to the COPII-coated vesicle membrane. Its function is as follows. Escort protein required for cholesterol as well as lipid homeostasis. Regulates export of the SCAP-SREBP complex from the endoplasmic reticulum to the Golgi upon low cholesterol, thereby regulating the processing of sterol regulatory element-binding proteins (SREBPs) SREBF1/SREBP1 and SREBF2/SREBP2. At high sterol concentrations, formation of a ternary complex with INSIG (INSIG1 or INSIG2) leads to mask the ER export signal in SCAP, promoting retention of the complex in the endoplasmic reticulum. Low sterol concentrations trigger release of INSIG, a conformational change in the SSD domain of SCAP, unmasking of the ER export signal, promoting recruitment into COPII-coated vesicles and transport of the SCAP-SREBP to the Golgi: in the Golgi, SREBPs are then processed, releasing the transcription factor fragment of SREBPs from the membrane, its import into the nucleus and up-regulation of LDLR, INSIG1 and the mevalonate pathway. Binds cholesterol via its SSD domain. The chain is Sterol regulatory element-binding protein cleavage-activating protein from Xenopus laevis (African clawed frog).